A 765-amino-acid chain; its full sequence is BRCA1-associated RING domain protein 1 (765 aa).

Residues 20-113 form a required for BRCA1 binding region; sequence MEPATDGLWA…KLQNLLHDNK (94 aa). Residues 44 to 81 form an RING-type zinc finger; sequence CSRCANILKEPVCLGGCEHIFCSGCISDCVGSGCPVCY. Residue Lys152 forms a Glycyl lysine isopeptide (Lys-Gly) (interchain with G-Cter in SUMO2) linkage. 3 disordered regions span residues 183–229, 299–328, and 369–410; these read AVPK…EELK, KDLR…GSNI, and NASD…MPAR. A compositionally biased stretch (basic residues) spans 195-204; the sequence is SAKKHPKKSV. Basic and acidic residues predominate over residues 207 to 229; that stretch reads INREENLRPETKDSRFDSKEELK. The span at 316-328 shows a compositional bias: polar residues; it reads PTTSTSDSCGSNI. At Ser378 the chain carries Phosphoserine. Thr381 is subject to Phosphothreonine. The span at 391-403 shows a compositional bias: polar residues; the sequence is HRQMMSSPSTVKL. Residue Lys411 forms a Glycyl lysine isopeptide (Lys-Gly) (interchain with G-Cter in SUMO2) linkage. ANK repeat units lie at residues 415-447, 448-480, and 481-513; these read RGET…VKDH, AGWT…TPGY, and QNDS…AVNI. The stretch at 514 to 534 is one ANK 4; degenerate repeat; that stretch reads FGVRPVDYTDNENIRSLLLLP. The tract at residues 542 to 546 is flexible linker; it reads TSQCS. BRCT domains are found at residues 549 to 641 and 655 to 765; these read NTGQ…KYEV and LLPK…PLDS.

In terms of assembly, homo- and heterodimer. Heterodimer (RING-type zinc finger) with BRCA1. Heterodimer (via ANK repeats and BRCT domains) with CSTF1/CSTF-50. Component of the BRCA1-A complex, at least composed of the BRCA1, BARD1, UIMC1/RAP80, ABRAXAS1, BRCC3/BRCC36, BABAM2 and BABAM1/NBA1. Interacts with UBXN1. In terms of processing, processed during apoptosis. The homodimer is more susceptible to proteolytic cleavage than the BARD1/BRCA1 heterodimer.

Its subcellular location is the nucleus. The protein localises to the cytoplasm. It catalyses the reaction S-ubiquitinyl-[E2 ubiquitin-conjugating enzyme]-L-cysteine + [acceptor protein]-L-lysine = [E2 ubiquitin-conjugating enzyme]-L-cysteine + N(6)-ubiquitinyl-[acceptor protein]-L-lysine.. The protein operates within protein modification; protein ubiquitination. Its function is as follows. E3 ubiquitin-protein ligase. The BRCA1-BARD1 heterodimer specifically mediates the formation of 'Lys-6'-linked polyubiquitin chains and coordinates a diverse range of cellular pathways such as DNA damage repair, ubiquitination and transcriptional regulation to maintain genomic stability. Plays a central role in the control of the cell cycle in response to DNA damage. Acts by mediating ubiquitin E3 ligase activity that is required for its tumor suppressor function. Also forms a heterodimer with CSTF1/CSTF-50 to modulate mRNA processing and RNAP II stability by inhibiting pre-mRNA 3' cleavage. In Mus musculus (Mouse), this protein is BRCA1-associated RING domain protein 1 (Bard1).